Here is a 505-residue protein sequence, read N- to C-terminus: MGETLGDSPIDPESDSFTDTLSANISQEMTMVDTEMPFWPTNFGISSVDLSVMEDHSHSFDIKPFTTVDFSSISTPHYEDIPFTRTDPVVADYKYDLKLQEYQSAIKVEPASPPYYSEKTQLYNKPHEEPSNSLMAIECRVCGDKASGFHYGVHACEGCKGFFRRTIRLKLIYDRCDLNCRIHKKSRNKCQYCRFQKCLAVGMSHNAIRFGRMPQAEKEKLLAEISSDIDQLNPESADLRALAKHLYDSYIKSFPLTKAKARAILTGKTTDKSPFVIYDMNSLMMGEDKIKFKHITPLQEQSKEVAIRIFQGCQFRSVEAVQEITEYAKSIPGFVNLDLNDQVTLLKYGVHEIIYTMLASLMNKDGVLISEGQGFMTREFLKSLRKPFGDFMEPKFEFAVKFNALELDDSDLAIFIAVIILSGDRPGLLNVKPIEDIQDNLLQALELQLKLNHPESSQLFAKLLQKMTDLRQIVTEHVQLLQVIKKTETDMSLHPLLQEIYKDLY.

T84 is a glycosylation site (O-linked (GlcNAc) threonine). S112 is modified (phosphoserine). Residues 136–210 (AIECRVCGDK…VGMSHNAIRF (75 aa)) constitute a DNA-binding region (nuclear receptor). 2 consecutive NR C4-type zinc fingers follow at residues 139-159 (CRVC…CEGC) and 176-198 (CDLN…FQKC). Positions 205–280 (HNAIRFGRMP…DKSPFVIYDM (76 aa)) are interaction with FAM120B. The NR LBD domain occupies 238–503 (DLRALAKHLY…HPLLQEIYKD (266 aa)). K252 is covalently cross-linked (Glycyl lysine isopeptide (Lys-Gly) (interchain with G-Cter in ubiquitin)). Rosiglitazone-binding positions include 314–317 (QFRS), H351, H477, and Y501. Positions 495 to 503 (PLLQEIYKD) match the 9aaTAD motif.

The protein belongs to the nuclear hormone receptor family. NR1 subfamily. Interacts with FOXO1 (acetylated form). Heterodimer with other nuclear receptors, such as RXRA. The heterodimer with the retinoic acid receptor RXRA is called adipocyte-specific transcription factor ARF6. Interacts with NCOA6 coactivator, leading to a strong increase in transcription of target genes. Interacts with coactivator PPARBP, leading to a mild increase in transcription of target genes. Interacts with NOCA7 in a ligand-inducible manner. Interacts with NCOA1 and NCOA2 LXXLL motifs. Interacts with ASXL1, ASXL2, DNTTIP2, FAM120B, MAP2K1/MEK1, NR0B2, PDPK1, PRDM16, PRMT2 and TGFB1I1. Interacts (when activated by agonist) with PPP5C. Interacts with HELZ2 and THRAP3; the interaction stimulates the transcriptional activity of PPARG. Interacts with PER2, the interaction is ligand dependent and blocks PPARG recruitment to target promoters. Interacts with NOCT. Interacts with ACTN4. Interacts (when in the liganded conformation) with GPS2. Interacts with CRY1 and CRY2 in a ligand-dependent manner. In the absence of hormonal ligand, interacts with TACC1. In macrophages, interacts with PAQR3 and STUB1; the interactions promote PPARG poylubiquitination and STUB1-mediated degradation. O-GlcNAcylation at Thr-84 reduces transcriptional activity in adipocytes. In terms of processing, phosphorylated in basal conditions and dephosphorylated when treated with the ligand. May be dephosphorylated by PPP5C. The phosphorylated form may be inactive and dephosphorylation at Ser-112 induces adipogenic activity. Post-translationally, ubiquitinated by E3 ubiquitin-protein ligase complex containing FBXO9; leading to proteasomal degradation. Ubiquitinated at Lys-252 by TRIM55 leading to proteasomal degradation. Ubiquitinated by E3 ubiquitin-protein ligase STUB1/CHIP; leading to proteasomal degradation. As to expression, highest expression in adipose tissue. Lower in skeletal muscle, spleen, heart and liver. Also detectable in placenta, lung and ovary.

It is found in the nucleus. The protein resides in the cytoplasm. PDPK1 activates its transcriptional activity independently of its kinase activity. Nuclear receptor that binds peroxisome proliferators such as hypolipidemic drugs and fatty acids. Once activated by a ligand, the nuclear receptor binds to DNA specific PPAR response elements (PPRE) and modulates the transcription of its target genes, such as acyl-CoA oxidase. It therefore controls the peroxisomal beta-oxidation pathway of fatty acids. Key regulator of adipocyte differentiation and glucose homeostasis. ARF6 acts as a key regulator of the tissue-specific adipocyte P2 (aP2) enhancer. Acts as a critical regulator of gut homeostasis by suppressing NF-kappa-B-mediated pro-inflammatory responses. Plays a role in the regulation of cardiovascular circadian rhythms by regulating the transcription of BMAL1 in the blood vessels. Its function is as follows. (Microbial infection) Upon treatment with M.tuberculosis or its lipoprotein LpqH, phosphorylation of MAPK p38 and IL-6 production are modulated, probably via this protein. The chain is Peroxisome proliferator-activated receptor gamma (PPARG) from Homo sapiens (Human).